Consider the following 94-residue polypeptide: Co-chaperonin GroES (94 aa).

Belongs to the GroES chaperonin family. As to quaternary structure, heptamer of 7 subunits arranged in a ring. Interacts with the chaperonin GroEL.

The protein resides in the cytoplasm. In terms of biological role, together with the chaperonin GroEL, plays an essential role in assisting protein folding. The GroEL-GroES system forms a nano-cage that allows encapsulation of the non-native substrate proteins and provides a physical environment optimized to promote and accelerate protein folding. GroES binds to the apical surface of the GroEL ring, thereby capping the opening of the GroEL channel. The chain is Co-chaperonin GroES from Clostridioides difficile (Peptoclostridium difficile).